Reading from the N-terminus, the 163-residue chain is Jun dimerization protein 2 (163 aa).

Disordered stretches follow at residues 1–20 (MMPG…PGLG) and 58–89 (GKRP…AARC). Lys65 participates in a covalent cross-link: Glycyl lysine isopeptide (Lys-Gly) (interchain with G-Cter in SUMO2). In terms of domain architecture, bZIP spans 72-135 (EERRKRRREK…QQLILMLNRH (64 aa)). Positions 74 to 96 (RRKRRREKNKVAAARCRNKKKER) are basic motif. Residues 100-128 (LQRESERLELMNAELKTQIEELKQERQQL) are leucine-zipper. Thr148 bears the Phosphothreonine; by MAPK8 mark.

The protein belongs to the bZIP family. ATF subfamily. Forms a homodimer or heterodimer with JUN, JUNB, JUND, CEBPG and ATF2 thereby inhibiting transactivation by JUN, ATF2 and CEBPG. Binds multiple DNA elements such as cAMP-response element (CRE) and TPA response element (TRE) either as homodimer or heterodimer. Interacts with IRF2BP1. Phosphorylation of Thr-148 by MAPK8 in response to different stress conditions such as, UV irradiation, oxidatives stress and anisomycin treatments. In terms of processing, polyubiquitinated; probably by IRF2BP1.

Its subcellular location is the nucleus. Component of the AP-1 transcription factor that represses transactivation mediated by the Jun family of proteins. Involved in a variety of transcriptional responses associated with AP-1 such as UV-induced apoptosis, cell differentiation, tumorigenesis and antitumogeneris. Can also function as a repressor by recruiting histone deacetylase 3/HDAC3 to the promoter region of JUN. May control transcription via direct regulation of the modification of histones and the assembly of chromatin. The sequence is that of Jun dimerization protein 2 (JDP2) from Homo sapiens (Human).